We begin with the raw amino-acid sequence, 342 residues long: MKIAVLLSGGVDSSYSAYNLKEQGHELVGIYLKLHASEKKHDLYIKNAQKACEFLGIPLEVLDFQKDFKSVVYDAFISAYEEGQTPNPCALCNPLMKFGLALDHALKLGCEKIATGHYARIEENDKVSYIREALDKTKDQSYFLYALEHEVIAKLVFPLGDLLKKDIKPLALNAMPFLGTLETYKESQEICFVEKSYIDTLKKHVEVEKEGVVKNLQGKIIGTHKGYMQYTIGKRKGFNIKGALEPHFVVRIDAKKNELVVGKKEDLATHFLKAKNKSLMKDFKSGEYFIKARYRSMPTKAFVSLKDEMIEVELKEPFYGVAKGQALVVYKDDIVLGGGVIV.

ATP is bound by residues 6–13 (LLSGGVDS) and Leu-32. Cys-92 (nucleophile) is an active-site residue. Cys-92 and Cys-191 form a disulfide bridge. An ATP-binding site is contributed by Gly-116. An interaction with tRNA region spans residues 138 to 140 (KDQ). Cys-191 functions as the Cysteine persulfide intermediate in the catalytic mechanism. Residues 293 to 294 (RY) form an interaction with tRNA region.

Belongs to the MnmA/TRMU family.

The protein resides in the cytoplasm. The catalysed reaction is S-sulfanyl-L-cysteinyl-[protein] + uridine(34) in tRNA + AH2 + ATP = 2-thiouridine(34) in tRNA + L-cysteinyl-[protein] + A + AMP + diphosphate + H(+). Catalyzes the 2-thiolation of uridine at the wobble position (U34) of tRNA, leading to the formation of s(2)U34. This chain is tRNA-specific 2-thiouridylase MnmA, found in Helicobacter acinonychis (strain Sheeba).